The sequence spans 302 residues: RING-H2 finger protein ATL38 (302 aa).

The helical transmembrane segment at 15–35 threads the bilayer; that stretch reads LLVITIILFAIFIVGLASVCF. The segment at 96-138 adopts an RING-type; atypical zinc-finger fold; it reads CAVCICEFEDHETLRLMPECCHVFHADCVSVWLSDHSTCPLCR. The segment at 279–302 is disordered; sequence GEAVAPSKDSRRISVEQSQLDDRV. Residues 286-302 are compositionally biased toward basic and acidic residues; sequence KDSRRISVEQSQLDDRV.

It belongs to the RING-type zinc finger family. ATL subfamily.

Its subcellular location is the membrane. The enzyme catalyses S-ubiquitinyl-[E2 ubiquitin-conjugating enzyme]-L-cysteine + [acceptor protein]-L-lysine = [E2 ubiquitin-conjugating enzyme]-L-cysteine + N(6)-ubiquitinyl-[acceptor protein]-L-lysine.. Its pathway is protein modification; protein ubiquitination. This is RING-H2 finger protein ATL38 (ATL38) from Arabidopsis thaliana (Mouse-ear cress).